A 509-amino-acid polypeptide reads, in one-letter code: Dihydrolipoyl dehydrogenase, mitochondrial (509 aa).

Residues 1-35 (MQSWSRVYCSLAKRGHFNRISHGLQGVSSVPLRTY) constitute a mitochondrion transit peptide. An N6-acetyllysine; alternate modification is found at K66. Position 66 is an N6-succinyllysine; alternate (K66). FAD is bound by residues 71–80 (EKNDTLGGTC) and K89. Residues C80 and C85 are joined by a disulfide bond. Residues K122, K132, and K143 each carry the N6-acetyllysine; alternate modification. Residues K122, K132, and K143 each carry the N6-succinyllysine; alternate modification. G154 serves as a coordination point for FAD. An N6-succinyllysine mark is found at K159 and K166. 183 to 185 (TGS) is a binding site for FAD. NAD(+)-binding positions include 220-227 (GAGVIGVE) and E243. 2 positions are modified to N6-succinyllysine: K273 and K277. Residue V278 participates in NAD(+) binding. Phosphoserine occurs at positions 285 and 297. G314 provides a ligand contact to NAD(+). K346 bears the N6-acetyllysine mark. FAD-binding positions include D355 and 361–364 (MLAH). Residue K410 is modified to N6-acetyllysine; alternate. K410 bears the N6-succinyllysine; alternate mark. N6-acetyllysine occurs at positions 417 and 420. An N6-succinyllysine modification is found at K430. Catalysis depends on H487, which acts as the Proton acceptor. A Phosphoserine modification is found at S502. Position 505 is an N6-acetyllysine; alternate (K505). At K505 the chain carries N6-succinyllysine; alternate.

It belongs to the class-I pyridine nucleotide-disulfide oxidoreductase family. As to quaternary structure, homodimer. Part of the multimeric pyruvate dehydrogenase complex that contains multiple copies of pyruvate dehydrogenase (subunits PDHA (PDHA1 or PDHA2) and PDHB, E1), dihydrolipoamide acetyltransferase (DLAT, E2) and lipoamide dehydrogenase (DLD, E3). These subunits are bound to an inner core composed of about 48 DLAT and 12 PDHX molecules (by non covalent bonds). The 2-oxoglutarate dehydrogenase complex is composed of OGDH (2-oxoglutarate dehydrogenase; E1), DLST (dihydrolipoamide succinyltransferase; E2), DLD (dihydrolipoamide dehydrogenase; E3) and the assembly factor KGD4. It contains multiple copies of the three enzymatic components (E1, E2 and E3). In the nucleus, the 2-oxoglutarate dehydrogenase complex associates with KAT2A. Interacts with PDHX. It depends on FAD as a cofactor. Tyrosine phosphorylated.

Its subcellular location is the mitochondrion matrix. It localises to the nucleus. The protein resides in the cell projection. It is found in the cilium. The protein localises to the flagellum. Its subcellular location is the cytoplasmic vesicle. It localises to the secretory vesicle. The protein resides in the acrosome. The enzyme catalyses N(6)-[(R)-dihydrolipoyl]-L-lysyl-[protein] + NAD(+) = N(6)-[(R)-lipoyl]-L-lysyl-[protein] + NADH + H(+). Functionally, lipoamide dehydrogenase is a component of the glycine cleavage system as well as an E3 component of three alpha-ketoacid dehydrogenase complexes (pyruvate-, alpha-ketoglutarate-, and branched-chain amino acid-dehydrogenase complex). The 2-oxoglutarate dehydrogenase complex is mainly active in the mitochondrion. A fraction of the 2-oxoglutarate dehydrogenase complex also localizes in the nucleus and is required for lysine succinylation of histones: associates with KAT2A on chromatin and provides succinyl-CoA to histone succinyltransferase KAT2A. In monomeric form may have additional moonlighting function as serine protease. Involved in the hyperactivation of spermatazoa during capacitation and in the spermatazoal acrosome reaction. The protein is Dihydrolipoyl dehydrogenase, mitochondrial (DLD) of Cricetulus griseus (Chinese hamster).